The chain runs to 219 residues: MKISSFISTSLPLPTSVSGSSSVGEMSGRSVSQQTSDQYANNLAGRTESPQGSSLASRIIERLSSVAHSVIGFIQRMFSEGSHKPVVTPAPTPAQMPSPTSFSDSIKQLAAETLPKYMQQLNSLDAEMLQKNHDQFATGSGPLRGSITQCQGLMQFCGGELQAEASAILNTPVCGIPFSQWGTIGGAASAYVASGVDLTQAANEIKGLAQQMQKLLSLM.

Residues M1–D37 form a disordered region. The segment covering S8–S32 has biased composition (low complexity). Residues S101–M219 form the Bacterial Rho-GAP domain.

This sequence belongs to the YopE family.

It is found in the cell outer membrane. Essential virulence determinant; cytotoxic effector, involved in resistance to phagocytosis. This is Outer membrane virulence protein YopE (yopE) from Yersinia pestis.